The following is a 356-amino-acid chain: Dihydroorotate dehydrogenase (quinone) (356 aa).

Residues 60-64 (AGFDK) and S84 contribute to the FMN site. K64 contributes to the substrate binding site. 109–113 (NRFGF) serves as a coordination point for substrate. FMN-binding residues include N140 and N171. Residue N171 participates in substrate binding. The active-site Nucleophile is the S174. N176 contributes to the substrate binding site. FMN-binding residues include K216 and G244. Substrate is bound at residue 245 to 246 (NT). FMN contacts are provided by residues G267, G296, and 317–318 (YS).

It belongs to the dihydroorotate dehydrogenase family. Type 2 subfamily. In terms of assembly, monomer. FMN is required as a cofactor.

The protein resides in the cell membrane. The catalysed reaction is (S)-dihydroorotate + a quinone = orotate + a quinol. Its pathway is pyrimidine metabolism; UMP biosynthesis via de novo pathway; orotate from (S)-dihydroorotate (quinone route): step 1/1. Catalyzes the conversion of dihydroorotate to orotate with quinone as electron acceptor. This chain is Dihydroorotate dehydrogenase (quinone), found in Azorhizobium caulinodans (strain ATCC 43989 / DSM 5975 / JCM 20966 / LMG 6465 / NBRC 14845 / NCIMB 13405 / ORS 571).